The primary structure comprises 1025 residues: Multidrug resistance protein MdtC (1025 aa).

The next 12 membrane-spanning stretches (helical) occupy residues 3-23 (FFAL…AITL), 333-353 (EVEQ…FLFL), 360-380 (IIPA…MYLC), 387-407 (LSLM…IVVL), 431-451 (VGFT…PLLL), 463-483 (FAVT…TLTP), 528-548 (LVGV…ISIP), 853-873 (VILI…LYES), 875-895 (VHPL…LLAL), 897-917 (LFNA…IGIV), 953-973 (PIMM…LSGG), and 984-1004 (ITIV…TPVV).

Belongs to the resistance-nodulation-cell division (RND) (TC 2.A.6) family. MdtC subfamily. Part of a tripartite efflux system composed of MdtA, MdtB and MdtC. MdtC forms a heteromultimer with MdtB.

It localises to the cell inner membrane. The chain is Multidrug resistance protein MdtC from Shigella boydii serotype 4 (strain Sb227).